An 856-amino-acid chain; its full sequence is DNA mismatch repair protein MutS (856 aa).

607–614 (GPNMSGKS) serves as a coordination point for ATP.

It belongs to the DNA mismatch repair MutS family.

Its function is as follows. This protein is involved in the repair of mismatches in DNA. It is possible that it carries out the mismatch recognition step. This protein has a weak ATPase activity. The chain is DNA mismatch repair protein MutS from Lactobacillus delbrueckii subsp. bulgaricus (strain ATCC 11842 / DSM 20081 / BCRC 10696 / JCM 1002 / NBRC 13953 / NCIMB 11778 / NCTC 12712 / WDCM 00102 / Lb 14).